Here is a 690-residue protein sequence, read N- to C-terminus: Glycine--tRNA ligase beta subunit (690 aa).

It belongs to the class-II aminoacyl-tRNA synthetase family. In terms of assembly, tetramer of two alpha and two beta subunits.

It localises to the cytoplasm. The enzyme catalyses tRNA(Gly) + glycine + ATP = glycyl-tRNA(Gly) + AMP + diphosphate. The sequence is that of Glycine--tRNA ligase beta subunit from Desulfatibacillum aliphaticivorans.